Reading from the N-terminus, the 272-residue chain is Hydroxyacylglutathione hydrolase (272 aa).

7 residues coordinate Zn(2+): H62, H64, D66, H67, H126, D146, and H184.

Belongs to the metallo-beta-lactamase superfamily. Glyoxalase II family. In terms of assembly, monomer. It depends on Zn(2+) as a cofactor.

The catalysed reaction is an S-(2-hydroxyacyl)glutathione + H2O = a 2-hydroxy carboxylate + glutathione + H(+). Its pathway is secondary metabolite metabolism; methylglyoxal degradation; (R)-lactate from methylglyoxal: step 2/2. Thiolesterase that catalyzes the hydrolysis of S-D-lactoyl-glutathione to form glutathione and D-lactic acid. The polypeptide is Hydroxyacylglutathione hydrolase (Saccharophagus degradans (strain 2-40 / ATCC 43961 / DSM 17024)).